Consider the following 452-residue polypeptide: Glutathione gamma-glutamylcysteinyltransferase 2 (452 aa).

One can recognise a Peptidase C83 domain in the interval 1-220 (MSMASLYRRS…GFMLISRPHR (220 aa)). A coiled-coil region spans residues 287 to 315 (EDVNQNLSSEEKSRLKLKQELLKQVQETK).

Belongs to the phytochelatin synthase family. Expressed in shoots, roots, leaves, stems and flowers.

The enzyme catalyses [Glu(-Cys)](n)-Gly + glutathione + H(+) = [Glu(-Cys)](n+1)-Gly + glycine. Requires cadmium for activity. Also activated in heterologous system by AsO(4)(3-) ions, but not by Cu(2+), Zn(2+), Mn(2+) or Ni(2+) ions. Its function is as follows. Involved in the synthesis of phytochelatins (PC) and homophytochelatins (hPC), the heavy-metal-binding peptides of plants. This is Glutathione gamma-glutamylcysteinyltransferase 2 (PCS2) from Arabidopsis thaliana (Mouse-ear cress).